The primary structure comprises 117 residues: DNA-binding protein MK1619 (117 aa).

Belongs to the PDCD5 family.

This chain is DNA-binding protein MK1619, found in Methanopyrus kandleri (strain AV19 / DSM 6324 / JCM 9639 / NBRC 100938).